We begin with the raw amino-acid sequence, 373 residues long: Dual-specificity RNA methyltransferase RlmN (373 aa).

E94 acts as the Proton acceptor in catalysis. Residues 100 to 339 (DGDRATLCVS…VTVRKTRGDD (240 aa)) enclose the Radical SAM core domain. Residues C107 and C344 are joined by a disulfide bond. 3 residues coordinate [4Fe-4S] cluster: C114, C118, and C121. Residues 168–169 (GE), S200, 222–224 (SLH), and N301 contribute to the S-adenosyl-L-methionine site. C344 serves as the catalytic S-methylcysteine intermediate.

Belongs to the radical SAM superfamily. RlmN family. The cofactor is [4Fe-4S] cluster.

It localises to the cytoplasm. The enzyme catalyses adenosine(2503) in 23S rRNA + 2 reduced [2Fe-2S]-[ferredoxin] + 2 S-adenosyl-L-methionine = 2-methyladenosine(2503) in 23S rRNA + 5'-deoxyadenosine + L-methionine + 2 oxidized [2Fe-2S]-[ferredoxin] + S-adenosyl-L-homocysteine. It catalyses the reaction adenosine(37) in tRNA + 2 reduced [2Fe-2S]-[ferredoxin] + 2 S-adenosyl-L-methionine = 2-methyladenosine(37) in tRNA + 5'-deoxyadenosine + L-methionine + 2 oxidized [2Fe-2S]-[ferredoxin] + S-adenosyl-L-homocysteine. In terms of biological role, specifically methylates position 2 of adenine 2503 in 23S rRNA and position 2 of adenine 37 in tRNAs. m2A2503 modification seems to play a crucial role in the proofreading step occurring at the peptidyl transferase center and thus would serve to optimize ribosomal fidelity. This Photobacterium profundum (strain SS9) protein is Dual-specificity RNA methyltransferase RlmN.